Here is a 589-residue protein sequence, read N- to C-terminus: Serine/threonine-protein kinase shk2 (589 aa).

The 103-residue stretch at 23–125 folds into the PH domain; it reads GIIRSGWVML…WMDLISSRAL (103 aa). The region spanning 129-142 is the CRIB domain; sequence VSSPMNPKHQVHVG. Residues 309 to 566 enclose the Protein kinase domain; it reads FNVKHKLGQG…AAELLTHSFL (258 aa). ATP is bound by residues 315-323 and Lys343; that span reads LGQGASGSV. Catalysis depends on Asp434, which acts as the Proton acceptor.

Belongs to the protein kinase superfamily. STE Ser/Thr protein kinase family. STE20 subfamily.

The enzyme catalyses L-seryl-[protein] + ATP = O-phospho-L-seryl-[protein] + ADP + H(+). It carries out the reaction L-threonyl-[protein] + ATP = O-phospho-L-threonyl-[protein] + ADP + H(+). Functionally, forms an activated complex with GTP-bound Ras-like cdc42. Participates in Ras-dependent morphological control and mating response pathways. In Schizosaccharomyces pombe (strain 972 / ATCC 24843) (Fission yeast), this protein is Serine/threonine-protein kinase shk2 (shk2).